The chain runs to 191 residues: uncharacterized protein (191 aa).

The HTH tetR-type domain maps to 3–63 (IDRKKLILEA…EIFTTLLKEM (61 aa)). Positions 26 to 45 (TMDLVAKLANVGKGTIYTFF) form a DNA-binding region, H-T-H motif.

This is an uncharacterized protein from Bacillus subtilis (strain 168).